Reading from the N-terminus, the 142-residue chain is Large ribosomal subunit protein uL13 (142 aa).

Belongs to the universal ribosomal protein uL13 family. In terms of assembly, part of the 50S ribosomal subunit.

In terms of biological role, this protein is one of the early assembly proteins of the 50S ribosomal subunit, although it is not seen to bind rRNA by itself. It is important during the early stages of 50S assembly. The polypeptide is Large ribosomal subunit protein uL13 (Pelobacter propionicus (strain DSM 2379 / NBRC 103807 / OttBd1)).